The primary structure comprises 288 residues: 33 kDa chaperonin (288 aa).

Intrachain disulfides connect Cys-235–Cys-237 and Cys-268–Cys-271.

The protein belongs to the HSP33 family. Post-translationally, under oxidizing conditions two disulfide bonds are formed involving the reactive cysteines. Under reducing conditions zinc is bound to the reactive cysteines and the protein is inactive.

The protein localises to the cytoplasm. Redox regulated molecular chaperone. Protects both thermally unfolding and oxidatively damaged proteins from irreversible aggregation. Plays an important role in the bacterial defense system toward oxidative stress. The polypeptide is 33 kDa chaperonin (Streptococcus thermophilus (strain CNRZ 1066)).